The sequence spans 152 residues: Ribonuclease H (152 aa).

The RNase H type-1 domain occupies 1–142; that stretch reads MNSKVVIYTD…ADKLAVQGRE (142 aa). Mg(2+) contacts are provided by D10, E48, D70, and D134.

The protein belongs to the RNase H family. Monomer. The cofactor is Mg(2+).

The protein localises to the cytoplasm. It catalyses the reaction Endonucleolytic cleavage to 5'-phosphomonoester.. In terms of biological role, endonuclease that specifically degrades the RNA of RNA-DNA hybrids. This Rickettsia akari (strain Hartford) protein is Ribonuclease H.